Reading from the N-terminus, the 300-residue chain is Ribosomal protein L11 methyltransferase (300 aa).

Positions 152, 173, 195, and 234 each coordinate S-adenosyl-L-methionine.

It belongs to the methyltransferase superfamily. PrmA family.

Its subcellular location is the cytoplasm. It carries out the reaction L-lysyl-[protein] + 3 S-adenosyl-L-methionine = N(6),N(6),N(6)-trimethyl-L-lysyl-[protein] + 3 S-adenosyl-L-homocysteine + 3 H(+). In terms of biological role, methylates ribosomal protein L11. This Paraburkholderia phymatum (strain DSM 17167 / CIP 108236 / LMG 21445 / STM815) (Burkholderia phymatum) protein is Ribosomal protein L11 methyltransferase.